The chain runs to 593 residues: Arginine--tRNA ligase (593 aa).

Residues 138-148 carry the 'HIGH' region motif; it reads ANPTGPLHVGH.

Belongs to the class-I aminoacyl-tRNA synthetase family. Monomer.

Its subcellular location is the cytoplasm. The catalysed reaction is tRNA(Arg) + L-arginine + ATP = L-arginyl-tRNA(Arg) + AMP + diphosphate. This chain is Arginine--tRNA ligase, found in Burkholderia cenocepacia (strain ATCC BAA-245 / DSM 16553 / LMG 16656 / NCTC 13227 / J2315 / CF5610) (Burkholderia cepacia (strain J2315)).